We begin with the raw amino-acid sequence, 153 residues long: ORM1-like protein 1 (153 aa).

Residues 1-26 (MNVGVAHSEVNPNTRVMNSRGMWLTY) lie on the Cytoplasmic side of the membrane. A run of 2 helical transmembrane segments spans residues 27 to 46 (ALGV…FSVP) and 47 to 64 (VAWT…YVFL). At 65–100 (HAVKGTPFETPDQGKARLLTHWEQLDYGVQFTSSRK) the chain is on the cytoplasmic side. The chain crosses the membrane as a helical span at residues 101-121 (FFTISPIILYFLASFYTKYDT). Residues 122–123 (TH) lie on the Extracellular side of the membrane. Residues 124-140 (FILNTASLLSVLIPKMP) form a helical membrane-spanning segment. Residues 141-153 (QLHGVRIFGINKY) lie on the Cytoplasmic side of the membrane.

It belongs to the ORM family. In terms of assembly, ceramide-sensitive subunit of the serine palmitoyltransferase (SPT) complex, which is also composed of SPTLC1, SPTLC2/3 and SPTSSA/B.

It localises to the endoplasmic reticulum membrane. Functionally, plays an essential role in the homeostatic regulation of sphingolipid de novo biosynthesis by modulating the activity of the serine palmitoyltransferase (SPT) in response to ceramide levels. When complexed to SPT, the binding of ceramides to its N-terminus stabilizes a conformation that block SPT substrate entry, hence preventing SPT catalytic activity. Through this mechanism, maintains ceramide levels at sufficient concentrations for the production of complex sphingolipids, but which prevents the accumulation of ceramides to levels that trigger apoptosis. The sequence is that of ORM1-like protein 1 (ORMDL1) from Bos taurus (Bovine).